The sequence spans 338 residues: Methionine import ATP-binding protein MetN 2 (338 aa).

The 241-residue stretch at 2–242 folds into the ABC transporter domain; sequence IEIEKVCVDF…PQHAFTQQLV (241 aa). Residue 39–46 participates in ATP binding; that stretch reads GTSGAGKS.

This sequence belongs to the ABC transporter superfamily. Methionine importer (TC 3.A.1.24) family. As to quaternary structure, the complex is composed of two ATP-binding proteins (MetN), two transmembrane proteins (MetI) and a solute-binding protein (MetQ).

The protein resides in the cell inner membrane. It carries out the reaction L-methionine(out) + ATP + H2O = L-methionine(in) + ADP + phosphate + H(+). The enzyme catalyses D-methionine(out) + ATP + H2O = D-methionine(in) + ADP + phosphate + H(+). Part of the ABC transporter complex MetNIQ involved in methionine import. Responsible for energy coupling to the transport system. This is Methionine import ATP-binding protein MetN 2 from Salmonella typhimurium (strain LT2 / SGSC1412 / ATCC 700720).